Here is a 514-residue protein sequence, read N- to C-terminus: 1-pyrroline-5-carboxylate dehydrogenase (514 aa).

Residues Glu286 and Cys320 contribute to the active site.

Belongs to the aldehyde dehydrogenase family. RocA subfamily.

It carries out the reaction L-glutamate 5-semialdehyde + NAD(+) + H2O = L-glutamate + NADH + 2 H(+). It participates in amino-acid degradation; L-proline degradation into L-glutamate; L-glutamate from L-proline: step 2/2. In Staphylococcus haemolyticus (strain JCSC1435), this protein is 1-pyrroline-5-carboxylate dehydrogenase.